A 473-amino-acid polypeptide reads, in one-letter code: UDP-glycosyltransferase 71A27 (473 aa).

Residue His-15 is the Proton acceptor of the active site. His-15 contributes to the an anthocyanidin binding site. Catalysis depends on Asp-117, which acts as the Charge relay. Positions 345, 347, 362, 365, 366, 367, and 370 each coordinate UDP-alpha-D-glucose. Residue Gly-385 coordinates an anthocyanidin. UDP-alpha-D-glucose is bound by residues Glu-386 and Gln-387.

The protein belongs to the UDP-glycosyltransferase family.

The catalysed reaction is (20S)-protopanaxadiol + UDP-alpha-D-glucose = (20S)-ginsenoside C-K + UDP + H(+). It participates in secondary metabolite biosynthesis; terpenoid biosynthesis. In terms of biological role, component of the triterpene saponins (e.g. PPD-type ginsenosides or panaxosides) biosynthetic pathways. Glycosyltransferase that catalyzes the biosynthesis of compound K from protopanaxadiol (PPD). The polypeptide is UDP-glycosyltransferase 71A27 (Panax ginseng (Korean ginseng)).